Here is a 405-residue protein sequence, read N- to C-terminus: Acetate kinase (405 aa).

Residue Asn-7 participates in Mg(2+) binding. Lys-14 contacts ATP. Arg-99 is a binding site for substrate. Asp-156 functions as the Proton donor/acceptor in the catalytic mechanism. ATP is bound by residues 215–219 (HLGNG), 290–292 (DMR), and 338–342 (GVGEH). A Mg(2+)-binding site is contributed by Glu-391.

It belongs to the acetokinase family. As to quaternary structure, homodimer. Requires Mg(2+) as cofactor. It depends on Mn(2+) as a cofactor.

It localises to the cytoplasm. The catalysed reaction is acetate + ATP = acetyl phosphate + ADP. The protein operates within metabolic intermediate biosynthesis; acetyl-CoA biosynthesis; acetyl-CoA from acetate: step 1/2. Catalyzes the formation of acetyl phosphate from acetate and ATP. Can also catalyze the reverse reaction. This chain is Acetate kinase, found in Nostoc punctiforme (strain ATCC 29133 / PCC 73102).